We begin with the raw amino-acid sequence, 672 residues long: Single-strand DNA endonuclease ASTE1 (672 aa).

The interval 349–398 is interaction with SHLD2; sequence TFLHTQVENMQRPNAHRISQPIRQIIYGLLLNGPSHAEDIAQNTLPSQLL.

This sequence belongs to the asteroid family. As to quaternary structure, interacts with SHLD1, SHLD2, SHLD3, RIF1 and MAD2L2/REV7.

Its function is as follows. Structure-specific DNA endonuclease that specifically cleaves single-stranded DNA and 3' overhang DNA. Contributes to the control of DNA double-strand break repair choice by antagonizing BRCA1-dependent homologous recombination (HR) and promoting non-homologous end-joining (NHEJ). Recruited to the single-stranded DNA ends by SHLD2 and cleaves the 3' exposed DNA ends, therefore inhibiting DNA end resection (necessary for HR) and promoting DNA end protection (necessary for NHEJ). This Mus musculus (Mouse) protein is Single-strand DNA endonuclease ASTE1 (Aste1).